A 490-amino-acid polypeptide reads, in one-letter code: MLFSLGPLTIVYGLVIFVVAKTIYNLYLHPLRSYPGPLLARATRWYYSYYVKIGLLPQKTKELHDQYGPCVRIAPDELSYNTAEAWEDICGHRTGQRTESFEKDLTFFPPAPNGVDSIVRIDDVHRRFRRLLSHPMSDKALGSQQEIITGYVDQLIHELRQRSERSEVVDMVRWFNFTSFDILGDLAFGESFGCLGSGLMHPWIELIFTSIKSVMDMQIIRRIPGLFSLILTIAGLQQKQDLQEQFMFCQKKARERYTKETTRPDFMTYILRATEEKGMTPEEIEANAQILIMAGSETTASALSGTLFYLLKNSMAMQKLRQEIHATFQAEAEITMRSTQSMEYLHAVLQEAMRVYPPVPCTFPRTTPPGGAMVCGRFVPGGYIVGVNQLAAMTSEKNFKDPLKFIPERWCGDERYQEDSRKAYQPFSYGPRNCLGKNLAYAEMRLVLTRLLWNFEFDLLEESKDWHAKQKVWMMWDKGDLKVRLKPLRH.

Residues 1-21 form a helical membrane-spanning segment; that stretch reads MLFSLGPLTIVYGLVIFVVAK. The N-linked (GlcNAc...) asparagine glycan is linked to N176. C434 is a heme binding site.

The protein belongs to the cytochrome P450 family. Heme serves as cofactor.

Its subcellular location is the membrane. It participates in mycotoxin biosynthesis. Cytochrome P450 monooxygenase; part of the gene cluster that mediates the biosynthesis of aspirochlorine (or antibiotic A30641), an unusual halogenated spiro compound with distinctive antifungal properties due to selective inhibition of protein biosynthesis, and which is also active against bacteria, viruses, and murine tumor cells. The non-ribosomal peptide synthetase (NRPS) aclP is responsible the formation of the diketopiperazine (DKP) core from the condensation of 2 phenylalanine residues. One Phe residue is tailored into chlorotyrosine by hydroxylation and chlorination, whereas the second Phe undergoes an unprecedented C-C bond cleavage to be converted into glycine. After formation of the DKP, sulfur is incorporated into the DKP by conjugation with glutathione by aclG, followed by its stepwise degradation to the thiol by aclI, aclJ and aclK, and the dithiol oxidation by aclT. In addition, oxygenases (aclB, aclC, aclL and aclO) and O-methyltransferases (aclM and aclU) act as tailoring enzymes to produce the intermediate dechloroaspirochlorine. Ultimately, chlorination of dechloroaspirochlorine by the halogenase aclH is the last step in the aspirochlorine pathway. The protein is Cytochrome P450 monooxygenase aclL of Aspergillus oryzae (strain ATCC 42149 / RIB 40) (Yellow koji mold).